We begin with the raw amino-acid sequence, 146 residues long: Large ribosomal subunit protein uL15 (146 aa).

The segment covering 1 to 13 (MKLHELKPAEGSR) has biased composition (basic and acidic residues). The tract at residues 1–47 (MKLHELKPAEGSRKSRKRIGRGTGSGLGRNAGKGEKGQKARAGGGVR) is disordered. Positions 21-31 (RGTGSGLGRNA) are enriched in gly residues.

Belongs to the universal ribosomal protein uL15 family. Part of the 50S ribosomal subunit.

Functionally, binds to the 23S rRNA. The sequence is that of Large ribosomal subunit protein uL15 from Clostridium kluyveri (strain NBRC 12016).